Reading from the N-terminus, the 272-residue chain is uncharacterized protein (272 aa).

Lys185 serves as the catalytic Schiff-base intermediate with substrate.

This sequence belongs to the DeoC/FbaB aldolase family.

This is an uncharacterized protein from Saccharolobus solfataricus (strain ATCC 35092 / DSM 1617 / JCM 11322 / P2) (Sulfolobus solfataricus).